Consider the following 660-residue polypeptide: Bifunctional polymyxin resistance protein ArnA (660 aa).

Residues 1 to 304 form a formyltransferase ArnAFT region; it reads MKAVIFAYHD…TLGLVAGARL (304 aa). Histidine 104 serves as the catalytic Proton donor; for formyltransferase activity. (6R)-10-formyltetrahydrofolate contacts are provided by residues arginine 114 and 136–140; that span reads VKRAD. The interval 314–660 is dehydrogenase ArnADH; that stretch reads RRIRVLILGV…RSVDVAERAS (347 aa). NAD(+) is bound by residues aspartate 347 and 368–369; that span reads DI. UDP-alpha-D-glucuronate-binding positions include alanine 393, tyrosine 398, and 432-433; that span reads TS. Catalysis depends on glutamate 434, which acts as the Proton acceptor; for decarboxylase activity. Residues arginine 460, asparagine 492, 526–535, and tyrosine 613 each bind UDP-alpha-D-glucuronate; that span reads KLIDGGQQKR. The active-site Proton donor; for decarboxylase activity is arginine 619.

It in the N-terminal section; belongs to the Fmt family. UDP-L-Ara4N formyltransferase subfamily. The protein in the C-terminal section; belongs to the NAD(P)-dependent epimerase/dehydratase family. UDP-glucuronic acid decarboxylase subfamily. As to quaternary structure, homohexamer, formed by a dimer of trimers.

It carries out the reaction UDP-alpha-D-glucuronate + NAD(+) = UDP-beta-L-threo-pentopyranos-4-ulose + CO2 + NADH. The enzyme catalyses UDP-4-amino-4-deoxy-beta-L-arabinose + (6R)-10-formyltetrahydrofolate = UDP-4-deoxy-4-formamido-beta-L-arabinose + (6S)-5,6,7,8-tetrahydrofolate + H(+). It functions in the pathway nucleotide-sugar biosynthesis; UDP-4-deoxy-4-formamido-beta-L-arabinose biosynthesis; UDP-4-deoxy-4-formamido-beta-L-arabinose from UDP-alpha-D-glucuronate: step 1/3. Its pathway is nucleotide-sugar biosynthesis; UDP-4-deoxy-4-formamido-beta-L-arabinose biosynthesis; UDP-4-deoxy-4-formamido-beta-L-arabinose from UDP-alpha-D-glucuronate: step 3/3. The protein operates within bacterial outer membrane biogenesis; lipopolysaccharide biosynthesis. Functionally, bifunctional enzyme that catalyzes the oxidative decarboxylation of UDP-glucuronic acid (UDP-GlcUA) to UDP-4-keto-arabinose (UDP-Ara4O) and the addition of a formyl group to UDP-4-amino-4-deoxy-L-arabinose (UDP-L-Ara4N) to form UDP-L-4-formamido-arabinose (UDP-L-Ara4FN). The modified arabinose is attached to lipid A and is required for resistance to polymyxin and cationic antimicrobial peptides. In Salmonella paratyphi B (strain ATCC BAA-1250 / SPB7), this protein is Bifunctional polymyxin resistance protein ArnA.